The primary structure comprises 225 residues: Phosphatidylserine decarboxylase proenzyme (225 aa).

Ser182 serves as the catalytic Schiff-base intermediate with substrate; via pyruvic acid. The residue at position 182 (Ser182) is a Pyruvic acid (Ser); by autocatalysis.

Belongs to the phosphatidylserine decarboxylase family. PSD-A subfamily. As to quaternary structure, heterodimer of a large membrane-associated beta subunit and a small pyruvoyl-containing alpha subunit. The cofactor is pyruvate. Is synthesized initially as an inactive proenzyme. Formation of the active enzyme involves a self-maturation process in which the active site pyruvoyl group is generated from an internal serine residue via an autocatalytic post-translational modification. Two non-identical subunits are generated from the proenzyme in this reaction, and the pyruvate is formed at the N-terminus of the alpha chain, which is derived from the carboxyl end of the proenzyme. The post-translation cleavage follows an unusual pathway, termed non-hydrolytic serinolysis, in which the side chain hydroxyl group of the serine supplies its oxygen atom to form the C-terminus of the beta chain, while the remainder of the serine residue undergoes an oxidative deamination to produce ammonia and the pyruvoyl prosthetic group on the alpha chain.

It is found in the cell membrane. It carries out the reaction a 1,2-diacyl-sn-glycero-3-phospho-L-serine + H(+) = a 1,2-diacyl-sn-glycero-3-phosphoethanolamine + CO2. Its pathway is phospholipid metabolism; phosphatidylethanolamine biosynthesis; phosphatidylethanolamine from CDP-diacylglycerol: step 2/2. Its function is as follows. Catalyzes the formation of phosphatidylethanolamine (PtdEtn) from phosphatidylserine (PtdSer). This chain is Phosphatidylserine decarboxylase proenzyme, found in Neorickettsia sennetsu (strain ATCC VR-367 / Miyayama) (Ehrlichia sennetsu).